The following is a 609-amino-acid chain: Arginine--tRNA ligase (609 aa).

The short motif at 132-142 (ANPTSSLHVGH) is the 'HIGH' region element.

This sequence belongs to the class-I aminoacyl-tRNA synthetase family. In terms of assembly, monomer.

The protein localises to the cytoplasm. The catalysed reaction is tRNA(Arg) + L-arginine + ATP = L-arginyl-tRNA(Arg) + AMP + diphosphate. The sequence is that of Arginine--tRNA ligase from Psychrobacter cryohalolentis (strain ATCC BAA-1226 / DSM 17306 / VKM B-2378 / K5).